A 129-amino-acid chain; its full sequence is Phosphoribosyl-AMP cyclohydrolase (129 aa).

Mg(2+) is bound at residue Asp-78. Cys-79 provides a ligand contact to Zn(2+). 2 residues coordinate Mg(2+): Asp-80 and Asp-82. Cys-96 and Cys-103 together coordinate Zn(2+).

This sequence belongs to the PRA-CH family. As to quaternary structure, homodimer. Requires Mg(2+) as cofactor. It depends on Zn(2+) as a cofactor.

Its subcellular location is the cytoplasm. It catalyses the reaction 1-(5-phospho-beta-D-ribosyl)-5'-AMP + H2O = 1-(5-phospho-beta-D-ribosyl)-5-[(5-phospho-beta-D-ribosylamino)methylideneamino]imidazole-4-carboxamide. Its pathway is amino-acid biosynthesis; L-histidine biosynthesis; L-histidine from 5-phospho-alpha-D-ribose 1-diphosphate: step 3/9. Functionally, catalyzes the hydrolysis of the adenine ring of phosphoribosyl-AMP. The protein is Phosphoribosyl-AMP cyclohydrolase of Nitrosomonas eutropha (strain DSM 101675 / C91 / Nm57).